Consider the following 283-residue polypeptide: 4-diphosphocytidyl-2-C-methyl-D-erythritol kinase (283 aa).

Residue lysine 8 is part of the active site. An ATP-binding site is contributed by 90–100 (PIGSGLAGGSS). The active site involves aspartate 132.

The protein belongs to the GHMP kinase family. IspE subfamily.

It carries out the reaction 4-CDP-2-C-methyl-D-erythritol + ATP = 4-CDP-2-C-methyl-D-erythritol 2-phosphate + ADP + H(+). It participates in isoprenoid biosynthesis; isopentenyl diphosphate biosynthesis via DXP pathway; isopentenyl diphosphate from 1-deoxy-D-xylulose 5-phosphate: step 3/6. Functionally, catalyzes the phosphorylation of the position 2 hydroxy group of 4-diphosphocytidyl-2C-methyl-D-erythritol. The protein is 4-diphosphocytidyl-2-C-methyl-D-erythritol kinase of Chlamydia muridarum (strain MoPn / Nigg).